Reading from the N-terminus, the 517-residue chain is Protein MGF 505-2R (517 aa).

This sequence belongs to the asfivirus MGF 505 family.

Functionally, plays a role in virus cell tropism, and may be required for efficient virus replication in macrophages. This chain is Protein MGF 505-2R, found in African swine fever virus (isolate Warthog/Namibia/Wart80/1980) (ASFV).